The primary structure comprises 353 residues: Sesquiterpene synthase Agr8 (353 aa).

The Mg(2+) site is built by Asp-82, Asn-220, Ser-224, and Glu-228. The DDXXD motif motif lies at 82–86 (DEYTD). (2E,6E)-farnesyl diphosphate is bound by residues Arg-309 and Tyr-310.

This sequence belongs to the terpene synthase family. The cofactor is Mg(2+).

It carries out the reaction (2E,6E)-farnesyl diphosphate = gamma-muurolene + diphosphate. The catalysed reaction is (2E,6E)-farnesyl diphosphate = alpha-selinene + diphosphate. It catalyses the reaction (2E,6E)-farnesyl diphosphate = delta-cadinene + diphosphate. In terms of biological role, terpene cyclase that catalyzes the cyclization of farnesyl diphosphate (FPP) to various sesquiterpenes, including beta-elemene, gamma-muurolene, alpha-selinene, beta-selinene, beta-cadinene, delta-cadinene and alpha-cadinol. In Cyclocybe aegerita (Black poplar mushroom), this protein is Sesquiterpene synthase Agr8.